A 95-amino-acid chain; its full sequence is Co-chaperonin GroES (95 aa).

It belongs to the GroES chaperonin family. Heptamer of 7 subunits arranged in a ring. Interacts with the chaperonin GroEL.

The protein resides in the cytoplasm. Its function is as follows. Together with the chaperonin GroEL, plays an essential role in assisting protein folding. The GroEL-GroES system forms a nano-cage that allows encapsulation of the non-native substrate proteins and provides a physical environment optimized to promote and accelerate protein folding. GroES binds to the apical surface of the GroEL ring, thereby capping the opening of the GroEL channel. The polypeptide is Co-chaperonin GroES (Streptococcus mutans serotype c (strain ATCC 700610 / UA159)).